A 101-amino-acid polypeptide reads, in one-letter code: MAKKSMKNRELKRQLTVAKFAKKRAELKATIVNLNASPEERFAAVVALQKQPRDASASRLRNRCRLTGRPHGVYRKFGLGRNMLRQAAMRGDVPGLVKASW.

This sequence belongs to the universal ribosomal protein uS14 family. As to quaternary structure, part of the 30S ribosomal subunit. Contacts proteins S3 and S10.

In terms of biological role, binds 16S rRNA, required for the assembly of 30S particles and may also be responsible for determining the conformation of the 16S rRNA at the A site. The sequence is that of Small ribosomal subunit protein uS14 from Pseudomonas putida (strain ATCC 47054 / DSM 6125 / CFBP 8728 / NCIMB 11950 / KT2440).